The primary structure comprises 427 residues: Glutamate-1-semialdehyde 2,1-aminomutase (427 aa).

Lysine 265 bears the N6-(pyridoxal phosphate)lysine mark.

This sequence belongs to the class-III pyridoxal-phosphate-dependent aminotransferase family. HemL subfamily. As to quaternary structure, homodimer. Pyridoxal 5'-phosphate is required as a cofactor.

Its subcellular location is the cytoplasm. It carries out the reaction (S)-4-amino-5-oxopentanoate = 5-aminolevulinate. It participates in porphyrin-containing compound metabolism; protoporphyrin-IX biosynthesis; 5-aminolevulinate from L-glutamyl-tRNA(Glu): step 2/2. This Burkholderia ambifaria (strain ATCC BAA-244 / DSM 16087 / CCUG 44356 / LMG 19182 / AMMD) (Burkholderia cepacia (strain AMMD)) protein is Glutamate-1-semialdehyde 2,1-aminomutase.